Consider the following 726-residue polypeptide: MKKLVIGILGIVIALFVGLLVFLIPIYKNLPDPKLLESWTPPQASEVYDAKGRLYGTIGIQKRFYVSIDKIPEHVINAFVATEDRNFWHHFGIDPVAIVRAAIVNYRAGRIVQGGSTITQQLAKNLFLTRERTLERKIKEALLAIKIERTFDKKKIMELYLNQIYLGSGAYGVEAAAQVYFGKHVWELSLDEAALLAALPKAPAKYNPFYHPERALQRRNLVLKRMLEEGYITPEQYEEAVNKPLTVKKENKYKFSDYFLDMVKSYVFNKYGEIAYKGRLKIYTTIDLDYQKIAQKSLEEGLKRVAKIIGLPFLPKSEEDMELAYEKEAQLKRLKRGKIYVAKILKYDGNFMKVEIHGKKLKGEIKGLNTEGHKYVFVKYLGGNRAEIIPDLEGSLVSIDVKTGEIKAIVGGRSYAYSQFNRAVKALRQPGSAIKPVIYLSALLKGMTQISTIDASSKPYYDPSKGEDWIPKNYDEKEYGNVTLRYALAHSINTAAVNLLDKVGFELVLEVGKKVGLDNLKPYYSLALGTVEVTPLQLTAAYQVFANLGTECKPFFIKKIVDENGEVLEENVPECEEVLPKPETRVPVDMLRAVVLEGTARRASVLDRIVAGKTGTTDDFQDAWFVGFSPYIVTGVWVGYDVKKSLGKHMSGSRVALPIWIDYMKVVTRMYPNEDFELPPENIVVNINPKDLVLADETCEGVPMVFVKGTEPHITCSDLNAILGLR.

Topologically, residues 1–3 (MKK) are cytoplasmic. A helical; Signal-anchor for type II membrane protein transmembrane segment spans residues 4–24 (LVIGILGIVIALFVGLLVFLI). Residues 25–726 (PIYKNLPDPK…SDLNAILGLR (702 aa)) lie on the Periplasmic side of the membrane. A transglycosylase region spans residues 45 to 213 (SEVYDAKGRL…AKYNPFYHPE (169 aa)). The active-site Proton donor; for transglycosylase activity is E83. The segment at 379-662 (KYLGGNRAEI…SRVALPIWID (284 aa)) is transpeptidase. Catalysis depends on S432, which acts as the Acyl-ester intermediate; for transpeptidase activity.

In the N-terminal section; belongs to the glycosyltransferase 51 family. It in the C-terminal section; belongs to the transpeptidase family.

It is found in the cell inner membrane. It carries out the reaction [GlcNAc-(1-&gt;4)-Mur2Ac(oyl-L-Ala-gamma-D-Glu-L-Lys-D-Ala-D-Ala)](n)-di-trans,octa-cis-undecaprenyl diphosphate + beta-D-GlcNAc-(1-&gt;4)-Mur2Ac(oyl-L-Ala-gamma-D-Glu-L-Lys-D-Ala-D-Ala)-di-trans,octa-cis-undecaprenyl diphosphate = [GlcNAc-(1-&gt;4)-Mur2Ac(oyl-L-Ala-gamma-D-Glu-L-Lys-D-Ala-D-Ala)](n+1)-di-trans,octa-cis-undecaprenyl diphosphate + di-trans,octa-cis-undecaprenyl diphosphate + H(+). The catalysed reaction is Preferential cleavage: (Ac)2-L-Lys-D-Ala-|-D-Ala. Also transpeptidation of peptidyl-alanyl moieties that are N-acyl substituents of D-alanine.. It participates in cell wall biogenesis; peptidoglycan biosynthesis. The chain is Penicillin-binding protein 1A (mrcA) from Aquifex aeolicus (strain VF5).